Reading from the N-terminus, the 356-residue chain is Probable methyltransferase-like protein 15 homolog (356 aa).

Residues 55–57 (GGH), aspartate 74, phenylalanine 103, aspartate 126, and glutamine 133 contribute to the S-adenosyl-L-methionine site.

The protein belongs to the methyltransferase superfamily. RsmH family.

Functionally, probable S-adenosyl-L-methionine-dependent methyltransferase. In Drosophila melanogaster (Fruit fly), this protein is Probable methyltransferase-like protein 15 homolog.